We begin with the raw amino-acid sequence, 233 residues long: Riboflavin kinase (233 aa).

A unknown region spans residues 1-99 (MSGATSTGDV…YRRIFEDPGE (99 aa)). Residues 100-233 (LALAGTVTSG…DDEVTIRVEA (134 aa)) form a riboflavin kinase region. CDP is bound at residue 109 to 114 (GMGEGR). Residues T138 and N140 each contribute to the Mg(2+) site. FMN is bound by residues T200 and E208. 213–216 (VKLR) provides a ligand contact to CDP.

Belongs to the archaeal riboflavin kinase family. It depends on Mg(2+) as a cofactor.

It carries out the reaction riboflavin + CTP = CDP + FMN + H(+). It functions in the pathway cofactor biosynthesis; FMN biosynthesis; FMN from riboflavin (CTP route): step 1/1. Functionally, catalyzes the CTP-dependent phosphorylation of riboflavin (vitamin B2) to form flavin mononucleotide (FMN). The chain is Riboflavin kinase (ribK) from Halobacterium salinarum (strain ATCC 700922 / JCM 11081 / NRC-1) (Halobacterium halobium).